The following is a 306-amino-acid chain: Phosphoadenosine phosphosulfate reductase (306 aa).

Disordered regions lie at residues 1–30 (MPAK…VSGG) and 245–266 (YHST…KGQA).

It belongs to the PAPS reductase family. CysH subfamily.

The enzyme catalyses [thioredoxin]-disulfide + sulfite + adenosine 3',5'-bisphosphate + 2 H(+) = [thioredoxin]-dithiol + 3'-phosphoadenylyl sulfate. The protein operates within sulfur metabolism; hydrogen sulfide biosynthesis; sulfite from sulfate: step 3/3. In terms of biological role, the NADP dependent reduction of PAPS into sulfite involves thioredoxin which probably plays the role of a thiol carrier. This is Phosphoadenosine phosphosulfate reductase (sA) from Emericella nidulans (strain FGSC A4 / ATCC 38163 / CBS 112.46 / NRRL 194 / M139) (Aspergillus nidulans).